The following is a 407-amino-acid chain: Peptidase T (407 aa).

His-82 provides a ligand contact to Zn(2+). Asp-84 is a catalytic residue. Residue Asp-143 coordinates Zn(2+). The active-site Proton acceptor is Glu-177. Glu-178, Asp-200, and His-382 together coordinate Zn(2+).

The protein belongs to the peptidase M20B family. Zn(2+) serves as cofactor.

Its subcellular location is the cytoplasm. The catalysed reaction is Release of the N-terminal residue from a tripeptide.. In terms of biological role, cleaves the N-terminal amino acid of tripeptides. The sequence is that of Peptidase T from Streptococcus pyogenes serotype M2 (strain MGAS10270).